The sequence spans 429 residues: Histidinol dehydrogenase (429 aa).

3 residues coordinate NAD(+): Tyr130, Gln191, and Asn214. Substrate-binding residues include Ser237, Gln259, and His262. Residues Gln259 and His262 each coordinate Zn(2+). Catalysis depends on proton acceptor residues Glu327 and His328. Substrate-binding residues include His328, Asp361, Glu415, and His420. Asp361 contributes to the Zn(2+) binding site. A Zn(2+)-binding site is contributed by His420.

This sequence belongs to the histidinol dehydrogenase family. Zn(2+) is required as a cofactor.

The catalysed reaction is L-histidinol + 2 NAD(+) + H2O = L-histidine + 2 NADH + 3 H(+). It functions in the pathway amino-acid biosynthesis; L-histidine biosynthesis; L-histidine from 5-phospho-alpha-D-ribose 1-diphosphate: step 9/9. Catalyzes the sequential NAD-dependent oxidations of L-histidinol to L-histidinaldehyde and then to L-histidine. The chain is Histidinol dehydrogenase from Nitrobacter winogradskyi (strain ATCC 25391 / DSM 10237 / CIP 104748 / NCIMB 11846 / Nb-255).